Consider the following 322-residue polypeptide: DNA repair and recombination protein RadA (322 aa).

ATP is bound at residue 105-112 (GMYGSGKT).

Belongs to the eukaryotic RecA-like protein family.

Involved in DNA repair and in homologous recombination. Binds and assemble on single-stranded DNA to form a nucleoprotein filament. Hydrolyzes ATP in a ssDNA-dependent manner and promotes DNA strand exchange between homologous DNA molecules. This Methanococcus maripaludis (strain C7 / ATCC BAA-1331) protein is DNA repair and recombination protein RadA.